A 47-amino-acid chain; its full sequence is Defensin-like protein 1 (47 aa).

Intrachain disulfides connect cysteine 3–cysteine 47, cysteine 14–cysteine 34, cysteine 20–cysteine 41, and cysteine 24–cysteine 43.

As to quaternary structure, monomer and homodimer.

In terms of biological role, inhibits trypsin but not chymotrypsin. This Vigna unguiculata (Cowpea) protein is Defensin-like protein 1.